We begin with the raw amino-acid sequence, 729 residues long: Sodium-dependent neutral amino acid transporter B(0)AT2 (729 aa).

Residues 1 to 69 (MPKNSKVVKR…ARPAWNSKLQ (69 aa)) are Cytoplasmic-facing. Phosphoserine occurs at positions 25 and 55. A run of 3 helical transmembrane segments spans residues 70–90 (YILAQVGFSVGLGNVWRFPYL), 98–117 (AYLLPYLILLLVIGIPLFFL), and 142–162 (GIGFASCVVCFFVALYYNVII). Residues 163–225 (GWSLFYFSQS…TSISESGGLN (63 aa)) lie on the Extracellular side of the membrane. Asn187 and Asn213 each carry an N-linked (GlcNAc...) asparagine glycan. 4 consecutive transmembrane segments (helical) span residues 226 to 244 (WKMTICLLAAWVVVCLAMI), 253 to 270 (IMYFSSLFPYVVLICFLI), 306 to 323 (VFFALGLGFGGVIAFSSY), and 335 to 356 (VLVSFINFFTSILATLVVFAVL). The Extracellular portion of the chain corresponds to 357-452 (GFKANVINEK…FIAFTEAMTH (96 aa)). Asn383 and Asn394 each carry an N-linked (GlcNAc...) asparagine glycan. The next 5 membrane-spanning stretches (helical) occupy residues 453-472 (FPASPFWSVMFFLMLVNLGL), 496-514 (ILTVICCLLAFCIGLIFVQ), 530-550 (TLPLLIVVILENIAVSFVYGI), 571-592 (YMWKYISPLMLLSLLIASIVNM), and 620-642 (VICISLMVLAILPIPVVFIIRRC). Topologically, residues 643–729 (NLIDDSSGNL…DMPDMPESDL (87 aa)) are cytoplasmic. A phosphoserine mark is found at Ser687, Ser699, and Ser701.

Belongs to the sodium:neurotransmitter symporter (SNF) (TC 2.A.22) family. SLC6A15 subfamily.

Its subcellular location is the membrane. The catalysed reaction is L-leucine(in) + Na(+)(in) = L-leucine(out) + Na(+)(out). The enzyme catalyses L-isoleucine(in) + Na(+)(in) = L-isoleucine(out) + Na(+)(out). It catalyses the reaction L-methionine(in) + Na(+)(in) = L-methionine(out) + Na(+)(out). It carries out the reaction L-proline(in) + Na(+)(in) = L-proline(out) + Na(+)(out). The catalysed reaction is L-alanine(in) + Na(+)(in) = L-alanine(out) + Na(+)(out). The enzyme catalyses L-asparagine(in) + Na(+)(in) = L-asparagine(out) + Na(+)(out). It catalyses the reaction L-valine(in) + Na(+)(in) = L-valine(out) + Na(+)(out). It carries out the reaction L-cysteine(in) + Na(+)(in) = L-cysteine(out) + Na(+)(out). The catalysed reaction is L-glutamine(in) + Na(+)(in) = L-glutamine(out) + Na(+)(out). The enzyme catalyses L-serine(in) + Na(+)(in) = L-serine(out) + Na(+)(out). It catalyses the reaction L-threonine(in) + Na(+)(in) = L-threonine(out) + Na(+)(out). It carries out the reaction L-pipecolate(in) + Na(+)(in) = L-pipecolate(out) + Na(+)(out). The catalysed reaction is L-phenylalanine(in) + Na(+)(in) = L-phenylalanine(out) + Na(+)(out). Its function is as follows. Functions as a sodium-dependent neutral amino acid transporter. Exhibits preference for the branched-chain amino acids, particularly leucine, valine and isoleucine and methionine. Can also transport low-affinity substrates such as alanine, phenylalanine, glutamine and pipecolic acid. Mediates the saturable, pH-sensitive and electrogenic cotransport of proline and sodium ions with a stoichiometry of 1:1. May have a role as transporter for neurotransmitter precursors into neurons. In contrast to other members of the neurotransmitter transporter family, does not appear to be chloride-dependent. This Bos taurus (Bovine) protein is Sodium-dependent neutral amino acid transporter B(0)AT2 (SLC6A15).